A 189-amino-acid chain; its full sequence is Adenylate kinase (189 aa).

An ATP-binding site is contributed by 10–15 (AAGKGT). An NMP region spans residues 30 to 59 (STGDMLRAAIASGSELGQKVKGVLDRGELV). AMP is bound by residues T31, R36, 57–59 (ELV), 85–88 (GFPR), and Q92. The tract at residues 126 to 136 (KRFAEQGRPDD) is LID. An ATP-binding site is contributed by R127. R133 and R144 together coordinate AMP. A172 serves as a coordination point for ATP.

This sequence belongs to the adenylate kinase family. Monomer.

The protein resides in the cytoplasm. It catalyses the reaction AMP + ATP = 2 ADP. It participates in purine metabolism; AMP biosynthesis via salvage pathway; AMP from ADP: step 1/1. Functionally, catalyzes the reversible transfer of the terminal phosphate group between ATP and AMP. Plays an important role in cellular energy homeostasis and in adenine nucleotide metabolism. This is Adenylate kinase from Caulobacter sp. (strain K31).